Reading from the N-terminus, the 541-residue chain is Membrane protein insertase YidC (541 aa).

Residues 6–26 (SLLVLALIFISFLVYQQWQLD) traverse the membrane as a helical segment. A disordered region spans residues 34 to 56 (EQTTSITATSDVPASSPSNSQAI). 4 helical membrane passes run 337–357 (FWLLTFIQGIVSNWGLAIICV), 416–436 (LGGCLPILLQMPIFIALYWTF), 454–474 (LSAQDPYYILPILMGISMFLL), and 495–515 (PLVFMFFFLWFPSGLVLYWLV).

The protein belongs to the OXA1/ALB3/YidC family. Type 1 subfamily. Interacts with the Sec translocase complex via SecD. Specifically interacts with transmembrane segments of nascent integral membrane proteins during membrane integration.

The protein localises to the cell inner membrane. Functionally, required for the insertion and/or proper folding and/or complex formation of integral membrane proteins into the membrane. Involved in integration of membrane proteins that insert both dependently and independently of the Sec translocase complex, as well as at least some lipoproteins. Aids folding of multispanning membrane proteins. The protein is Membrane protein insertase YidC of Haemophilus influenzae (strain ATCC 51907 / DSM 11121 / KW20 / Rd).